We begin with the raw amino-acid sequence, 297 residues long: Homoserine kinase (297 aa).

Position 82 to 92 (82 to 92 (PLTRGLGSSAS)) interacts with ATP.

Belongs to the GHMP kinase family. Homoserine kinase subfamily.

It is found in the cytoplasm. It carries out the reaction L-homoserine + ATP = O-phospho-L-homoserine + ADP + H(+). It functions in the pathway amino-acid biosynthesis; L-threonine biosynthesis; L-threonine from L-aspartate: step 4/5. Functionally, catalyzes the ATP-dependent phosphorylation of L-homoserine to L-homoserine phosphate. This is Homoserine kinase from Bacillus thuringiensis subsp. konkukian (strain 97-27).